The chain runs to 499 residues: Sensor histidine kinase VxrA (499 aa).

Residues 1–12 (MRYSFCMLEKTN) are Cytoplasmic-facing. Residues 13–31 (IPLIRALNLTLVSLCFAML) traverse the membrane as a helical segment. Residues 32–257 (PNPVHADSLP…ICWDVEDHSD (226 aa)) lie on the Periplasmic side of the membrane. Intrachain disulfides connect Cys-101–Cys-122 and Cys-241–Cys-249. A helical membrane pass occupies residues 258–280 (LLRTSMIILVIANIFLVLGWSGY). Over 281–499 (RWNSKRQEMR…IPCETDTASR (219 aa)) the chain is Cytoplasmic. In terms of domain architecture, Histidine kinase spans 298 to 494 (ILTHELRTPI…TFILEIPCET (197 aa)). His-301 is subject to Phosphohistidine; by autocatalysis.

In terms of assembly, homodimer. In terms of processing, autophosphorylated. Contains two disulfide bonds that may play a role in the stability of the protein. However, the disulfide bonds are not absolutely essential, as some activity and growth are detected in the absence of each disulfide bond.

The protein localises to the cell inner membrane. The enzyme catalyses ATP + protein L-histidine = ADP + protein N-phospho-L-histidine.. In terms of biological role, member of the two-component regulatory system VxrB/VxrA involved in the regulation of diverses processes, including virulence, the type VI secretion system (T6SS) and biofilm formation. Functions as a sensor protein kinase which is autophosphorylated at a histidine residue and transfers its phosphate group to the conserved aspartic acid residue in the regulatory domain of VxrB. Is critical for colonization in the infant mouse model. Contributes to the resistance to beta-lactam treatment. The sequence is that of Sensor histidine kinase VxrA from Vibrio cholerae serotype O1 (strain ATCC 39315 / El Tor Inaba N16961).